We begin with the raw amino-acid sequence, 372 residues long: Chaperone protein DnaJ (372 aa).

The region spanning 5-69 (DYYEVLGVDR…QKKARYDQFG (65 aa)) is the J domain. Residues 129 to 211 (GKETEIEIPR…CSGKGKVRKR (83 aa)) form a CR-type zinc finger. Zn(2+) contacts are provided by Cys142, Cys145, Cys159, Cys162, Cys185, Cys188, Cys199, and Cys202. CXXCXGXG motif repeat units follow at residues 142-149 (CGTCHGSG), 159-166 (CSHCGGSG), 185-192 (CNYCEGTG), and 199-206 (CATCSGKG).

The protein belongs to the DnaJ family. In terms of assembly, homodimer. Zn(2+) serves as cofactor.

The protein resides in the cytoplasm. In terms of biological role, participates actively in the response to hyperosmotic and heat shock by preventing the aggregation of stress-denatured proteins and by disaggregating proteins, also in an autonomous, DnaK-independent fashion. Unfolded proteins bind initially to DnaJ; upon interaction with the DnaJ-bound protein, DnaK hydrolyzes its bound ATP, resulting in the formation of a stable complex. GrpE releases ADP from DnaK; ATP binding to DnaK triggers the release of the substrate protein, thus completing the reaction cycle. Several rounds of ATP-dependent interactions between DnaJ, DnaK and GrpE are required for fully efficient folding. Also involved, together with DnaK and GrpE, in the DNA replication of plasmids through activation of initiation proteins. The protein is Chaperone protein DnaJ of Shouchella clausii (strain KSM-K16) (Alkalihalobacillus clausii).